The following is a 218-amino-acid chain: Probable transaldolase (218 aa).

The active-site Schiff-base intermediate with substrate is the K83.

It belongs to the transaldolase family. Type 3B subfamily.

Its subcellular location is the cytoplasm. The enzyme catalyses D-sedoheptulose 7-phosphate + D-glyceraldehyde 3-phosphate = D-erythrose 4-phosphate + beta-D-fructose 6-phosphate. It participates in carbohydrate degradation; pentose phosphate pathway; D-glyceraldehyde 3-phosphate and beta-D-fructose 6-phosphate from D-ribose 5-phosphate and D-xylulose 5-phosphate (non-oxidative stage): step 2/3. In terms of biological role, transaldolase is important for the balance of metabolites in the pentose-phosphate pathway. The protein is Probable transaldolase (tal) of Mesorhizobium japonicum (strain LMG 29417 / CECT 9101 / MAFF 303099) (Mesorhizobium loti (strain MAFF 303099)).